A 130-amino-acid chain; its full sequence is Transcription antitermination protein NusB (130 aa).

The protein belongs to the NusB family.

Functionally, involved in transcription antitermination. Required for transcription of ribosomal RNA (rRNA) genes. Binds specifically to the boxA antiterminator sequence of the ribosomal RNA (rrn) operons. The chain is Transcription antitermination protein NusB from Macrococcus caseolyticus (strain JCSC5402) (Macrococcoides caseolyticum).